A 263-amino-acid polypeptide reads, in one-letter code: Cell division protein DivIB (263 aa).

Over 1–32 the chain is Cytoplasmic; that stretch reads MNPGQDREKIVNIEERIPKIKEQRKQKANRRL. Residues 33 to 53 traverse the membrane as a helical segment; it reads ISFIMLFFIMVLIIVYLQTPI. An alpha region spans residues 51 to 123; that stretch reads TPISKVSTIS…NKINIAIEEY (73 aa). The POTRA domain occupies 54–123; that stretch reads SKVSTISVTG…NKINIAIEEY (70 aa). Topologically, residues 54–263 are extracellular; it reads SKVSTISVTG…DKAAKKEDEN (210 aa). Residues 124–251 are beta; it reads KAIAYLEKDD…EVATYFEEFG (128 aa). Positions 229-263 are gamma; sequence SQLSSNKKGIIHLEVATYFEEFGKNDKAAKKEDEN.

Belongs to the FtsQ/DivIB family. DivIB subfamily. In terms of assembly, interacts with FtsL, DivIC and PBP-2B.

It is found in the cell membrane. Cell division protein that may be involved in stabilizing or promoting the assembly of the division complex. Plays an essential role in division at high temperatures, maybe by protecting FtsL from degradation or by promoting formation of the FtsL-DivIC complex. May modulate the transpeptidase activity of PBP-2B. Also required for efficient sporulation at all temperatures. Could be directly involved in the engulfment process or be required to form a sporulation septum competent for engulfment. Influences the Spo0J/Soj system of chromosome segregation. The polypeptide is Cell division protein DivIB (Bacillus subtilis (strain 168)).